A 467-amino-acid polypeptide reads, in one-letter code: Heat shock factor protein 3 (467 aa).

A DNA-binding region spans residues 16–121 (VPGFLAKLWA…LLENIKRKVS (106 aa)). Residues 128-201 (LKVCAEDLHK…LSLMRGNYIV (74 aa)) are hydrophobic repeat HR-A/B. The tract at residues 364–389 (IQDFLNCIDASLEELQAMLSGKQYSF) is hydrophobic repeat HR-C. A disordered region spans residues 427 to 449 (EDLGASERETAGSKGGQEGTESC).

Belongs to the HSF family. Homotrimer. As to expression, expressed in most tissues. High levels are found in erythrocytes and low levels in liver.

The protein localises to the cytoplasm. It is found in the nucleus. In terms of biological role, DNA-binding protein that specifically binds heat shock promoter elements (HSE) and activates transcription. HSF3 binds DNA constitutively only when the C-terminal region is deleted. This Gallus gallus (Chicken) protein is Heat shock factor protein 3 (HSF3).